The following is a 226-amino-acid chain: Imidazoleglycerol-phosphate dehydratase (226 aa).

The disordered stretch occupies residues 23–55; sequence LTGGPIERPQPSLFASEKGANTAGPDDASQTTA.

Belongs to the imidazoleglycerol-phosphate dehydratase family.

The catalysed reaction is D-erythro-1-(imidazol-4-yl)glycerol 3-phosphate = 3-(imidazol-4-yl)-2-oxopropyl phosphate + H2O. Its pathway is amino-acid biosynthesis; L-histidine biosynthesis; L-histidine from 5-phospho-alpha-D-ribose 1-diphosphate: step 6/9. The sequence is that of Imidazoleglycerol-phosphate dehydratase (HIS3) from Maudiozyma humilis (Sour dough yeast).